A 576-amino-acid chain; its full sequence is MRTSQFFFTTLKEAPADAEVISQKMMLRAGYIKRAAAGIYTWMPLGLRVLRKVENIVREEMNNAGALELLMPAVQPAELWQESGRWEQYGPELLRFKDRHQREFVIGPTHEEVITDVVRRDVKSYRQLPIHLYQIQTKFRDEIRPRFGVMRGREFLMKDGYSFHASFDDLKREYGNMYDTYSRIFSRLGLKFRAVAADTGSIGGTGSHEFHVLADSGEDDIAFCPDSGYAANVELAEAMAPNEARAAASTLMEKTHTPGKMACADVAKFLELPLDRIVKSIAVMSEKEDGSQTFALLLLRGDHELNEIKASKIAAINPFRFATEEEVIERLGCKPGFIGPVAIDATKVAVFADRSVANMSDFVCGANEAGYHMTGVNFGRDLPEPEVFDIRNVVAGDASPDGQGKLEILRGIEVGHIFQLRQKYAEALNCVYLDDSGKSQIMEMGCYGIGVSRIVGAAIEQGNDDKGIILPPAIAPFEVCIVPMGYHKSEAVKASADQLYADLKKIGVDVVLDDRNERPGVMFADMELIGIPHRVVIGERGLKDGLFEYKSRIDAEPTMVAQTDIVTLLQGKLCAA.

It belongs to the class-II aminoacyl-tRNA synthetase family. ProS type 1 subfamily. As to quaternary structure, homodimer.

It is found in the cytoplasm. It carries out the reaction tRNA(Pro) + L-proline + ATP = L-prolyl-tRNA(Pro) + AMP + diphosphate. Catalyzes the attachment of proline to tRNA(Pro) in a two-step reaction: proline is first activated by ATP to form Pro-AMP and then transferred to the acceptor end of tRNA(Pro). As ProRS can inadvertently accommodate and process non-cognate amino acids such as alanine and cysteine, to avoid such errors it has two additional distinct editing activities against alanine. One activity is designated as 'pretransfer' editing and involves the tRNA(Pro)-independent hydrolysis of activated Ala-AMP. The other activity is designated 'posttransfer' editing and involves deacylation of mischarged Ala-tRNA(Pro). The misacylated Cys-tRNA(Pro) is not edited by ProRS. The protein is Proline--tRNA ligase of Dechloromonas aromatica (strain RCB).